Here is a 458-residue protein sequence, read N- to C-terminus: Paired box protein Pax-8 (458 aa).

The segment at residues 18–144 (GHGGLNQLGG…SSINRIIRTK (127 aa)) is a DNA-binding region (paired). A PAI subdomain region spans residues 21-77 (GLNQLGGAFVNGRPLPEVVRQRIVDLAHQGVRPCDISRQLRVSHGCVSKILGRYYET). The tract at residues 96 to 144 (KVVEKIGDYKRQNPTMFAWEIRDRLLAEGVCDNDTVPSVSSINRIIRTK) is RED subdomain. Residues 198–217 (PGADGKRKLDDSDQESCRLS) form a disordered region.

The protein localises to the nucleus. Functionally, probable transcription factor. Involved in kidney development, acting synergistically with lhx1/lim-1 to establish the pronephric primordium in late gastrulae/early neurulae. The chain is Paired box protein Pax-8 from Xenopus tropicalis (Western clawed frog).